We begin with the raw amino-acid sequence, 316 residues long: N-acetylmuramic acid 6-phosphate etherase (316 aa).

Residues 1–24 (MTRFQSDAAVSADRGHLMTEQPNP) are disordered. Residues 66–229 (IASRLKDGGR…STAVMVRLGK (164 aa)) enclose the SIS domain. E94 acts as the Proton donor in catalysis. E125 is an active-site residue.

This sequence belongs to the GCKR-like family. MurNAc-6-P etherase subfamily. In terms of assembly, homodimer.

It catalyses the reaction N-acetyl-D-muramate 6-phosphate + H2O = N-acetyl-D-glucosamine 6-phosphate + (R)-lactate. Its pathway is amino-sugar metabolism; N-acetylmuramate degradation. Its function is as follows. Specifically catalyzes the cleavage of the D-lactyl ether substituent of MurNAc 6-phosphate, producing GlcNAc 6-phosphate and D-lactate. The polypeptide is N-acetylmuramic acid 6-phosphate etherase (Parasynechococcus marenigrum (strain WH8102)).